A 499-amino-acid polypeptide reads, in one-letter code: Lysine--tRNA ligase (499 aa).

Residues Glu408 and Glu415 each coordinate Mg(2+).

Belongs to the class-II aminoacyl-tRNA synthetase family. Homodimer. The cofactor is Mg(2+).

The protein resides in the cytoplasm. It carries out the reaction tRNA(Lys) + L-lysine + ATP = L-lysyl-tRNA(Lys) + AMP + diphosphate. The polypeptide is Lysine--tRNA ligase (Bacillus thuringiensis (strain Al Hakam)).